The following is a 330-amino-acid chain: Phosphate acyltransferase (330 aa).

The protein belongs to the PlsX family. Homodimer. Probably interacts with PlsY.

The protein localises to the cytoplasm. The catalysed reaction is a fatty acyl-[ACP] + phosphate = an acyl phosphate + holo-[ACP]. Its pathway is lipid metabolism; phospholipid metabolism. In terms of biological role, catalyzes the reversible formation of acyl-phosphate (acyl-PO(4)) from acyl-[acyl-carrier-protein] (acyl-ACP). This enzyme utilizes acyl-ACP as fatty acyl donor, but not acyl-CoA. In Bacillus cereus (strain ATCC 14579 / DSM 31 / CCUG 7414 / JCM 2152 / NBRC 15305 / NCIMB 9373 / NCTC 2599 / NRRL B-3711), this protein is Phosphate acyltransferase.